A 106-amino-acid chain; its full sequence is Large ribosomal subunit protein uL24 (106 aa).

This sequence belongs to the universal ribosomal protein uL24 family. In terms of assembly, part of the 50S ribosomal subunit.

In terms of biological role, one of two assembly initiator proteins, it binds directly to the 5'-end of the 23S rRNA, where it nucleates assembly of the 50S subunit. Functionally, one of the proteins that surrounds the polypeptide exit tunnel on the outside of the subunit. This chain is Large ribosomal subunit protein uL24, found in Alkalilimnicola ehrlichii (strain ATCC BAA-1101 / DSM 17681 / MLHE-1).